Consider the following 345-residue polypeptide: uncharacterized protein (345 aa).

Over residues 1–13 (MSKPNTETISVNI) the composition is skewed to polar residues. Residues 1–23 (MSKPNTETISVNIPESEGVPLPD) are disordered. Residues 283–316 (SLKQRTNILKKQGETLKKNVEDINKDTSNLKRHA) are a coiled coil.

It localises to the virion. This is an uncharacterized protein from Acanthamoeba polyphaga mimivirus (APMV).